The sequence spans 95 residues: Small ribosomal subunit protein bS6 (95 aa).

This sequence belongs to the bacterial ribosomal protein bS6 family. As to quaternary structure, part of the 30S ribosomal subunit.

In terms of biological role, binds together with bS18 to 16S ribosomal RNA. The chain is Small ribosomal subunit protein bS6 (rpsF) from Bacillus subtilis (strain 168).